A 206-amino-acid polypeptide reads, in one-letter code: LexA repressor (206 aa).

A DNA-binding region (H-T-H motif) is located at residues 28–48; sequence RAEIARELGFRSANAAEEHLK. Active-site for autocatalytic cleavage activity residues include Ser-123 and Lys-160.

The protein belongs to the peptidase S24 family. Homodimer.

It carries out the reaction Hydrolysis of Ala-|-Gly bond in repressor LexA.. Its function is as follows. Represses a number of genes involved in the response to DNA damage (SOS response), including recA and lexA. In the presence of single-stranded DNA, RecA interacts with LexA causing an autocatalytic cleavage which disrupts the DNA-binding part of LexA, leading to derepression of the SOS regulon and eventually DNA repair. In Vibrio campbellii (strain ATCC BAA-1116), this protein is LexA repressor.